A 136-amino-acid polypeptide reads, in one-letter code: DNA-binding protein H-NS (136 aa).

Positions 13 to 67 (TLRAQARECTLETLEEMLEKLEVVVNERREEDSQAQAEIEERTRKLQQYREMLIA) form a coiled coil. The DNA-binding element occupies 113-118 (QGRTPA).

This sequence belongs to the histone-like protein H-NS family. Interacts with YmoA in the absence of DNA. Homodimer that oligomerizes on DNA into higher-order complexes that form bridges between disparate regions of DNA compacting it. Interacts with YmoA.

The protein localises to the cytoplasm. Its subcellular location is the nucleoid. A DNA-binding protein implicated in transcriptional repression and chromosome organization and compaction. Binds nucleation sites in AT-rich DNA and bridges them, forming higher-order nucleoprotein complexes and condensing the chromosome. As many horizontally transferred genes are AT-rich, it plays a central role in silencing foreign genes. A subset of genes are repressed by H-NS in association with YmoA. Complements a number of hns deficiencies in E.coli; represses the bgl operon, represses hemolysin expression. This Yersinia enterocolitica protein is DNA-binding protein H-NS.